A 270-amino-acid chain; its full sequence is MSKIAKTAIISPKAEIGKGVEIGEFCVIGDGVKLDEGVKLHNNVTLQGHTFIGKNTEIFPFAVLGTQPQDLKYKGEYSELMVGEDNLIREFCMINPGTEGGIKKTLIGDKNLLMAYVHVAHDCVIGSHCILANGVTLAGHIEIGDYVNIGGLTAIHQFVRIAKGCMIAGKSALGKDVPPYCTVEGNRAFIRGLNRHRMRQLLESKDIDFIHALYKRLFRPIPSLRESAKLELEEHANNPFVKEICSFILESSRGVAYKSSEYSSEEKQEE.

Belongs to the transferase hexapeptide repeat family. LpxA subfamily. In terms of assembly, homotrimer.

Its subcellular location is the cytoplasm. It carries out the reaction a (3R)-hydroxyacyl-[ACP] + UDP-N-acetyl-alpha-D-glucosamine = a UDP-3-O-[(3R)-3-hydroxyacyl]-N-acetyl-alpha-D-glucosamine + holo-[ACP]. Its pathway is glycolipid biosynthesis; lipid IV(A) biosynthesis; lipid IV(A) from (3R)-3-hydroxytetradecanoyl-[acyl-carrier-protein] and UDP-N-acetyl-alpha-D-glucosamine: step 1/6. Its function is as follows. Involved in the biosynthesis of lipid A, a phosphorylated glycolipid that anchors the lipopolysaccharide to the outer membrane of the cell. This is Acyl-[acyl-carrier-protein]--UDP-N-acetylglucosamine O-acyltransferase from Helicobacter pylori (strain J99 / ATCC 700824) (Campylobacter pylori J99).